A 336-amino-acid chain; its full sequence is MAMRKLLSKKLFNITNVASQSLMNCRISSSSLAVRTRVPNDSTDTTKIAPEPGDLAMSRRFMHNSAMIRPAEIMQMPVGESLIEKLREIDGSKDRIRLDGLSPPERETSLTVADTKKLLRAAQIEIVKSKLRETGRSWMPYKEFVSVCGEASSDPDLGSKIAKMLDDSANVIVLGDSVCIRPDQVTKSIEGLLPLPKIHNPNDPRRIEFKELEAEKAVIDVKAHTLVRKELWAGLGYLILQTAGFMRLTFWELSWDVMEPICFYVTSVYFMAGYAFFLRTSKEPSFEGFYQSRFEAKQRKLMNEYEFDLERYNELKKLFCSKPSDHVSKILGAIKS.

A mitochondrion-targeting transit peptide spans 1 to 69; it reads MAMRKLLSKK…RFMHNSAMIR (69 aa). 2 consecutive transmembrane segments (helical) span residues 231 to 251 and 257 to 277; these read LWAGLGYLILQTAGFMRLTFW and VMEPICFYVTSVYFMAGYAFF. A Selectivity filter motif is present at residues 255–263; that stretch reads WDVMEPICF. Position 259 (Glu259) interacts with Ca(2+).

Belongs to the MCU (TC 1.A.77) family.

Its subcellular location is the mitochondrion inner membrane. The catalysed reaction is Ca(2+)(in) = Ca(2+)(out). Functionally, mitochondrial inner membrane calcium uniporter that mediates calcium uptake into mitochondria. Constitutes a pore-forming and calcium-conducting subunit. Mitochondrial calcium homeostasis plays key roles in cellular physiology and regulates cell bioenergetics, cytoplasmic calcium signals and activation of cell death pathways. The polypeptide is Calcium uniporter protein 3, mitochondrial (Arabidopsis thaliana (Mouse-ear cress)).